A 516-amino-acid polypeptide reads, in one-letter code: Citrate synthase, glyoxysomal (516 aa).

Residues 1–43 (MPTDMELSPSNVARHRLAVLAAHLSAASLEPPVMASSLEAHCV) constitute a glyoxysome transit peptide. Catalysis depends on residues histidine 329, histidine 368, and aspartate 424.

It belongs to the citrate synthase family.

The protein localises to the glyoxysome. It carries out the reaction oxaloacetate + acetyl-CoA + H2O = citrate + CoA + H(+). It participates in carbohydrate metabolism; glyoxylate cycle; isocitrate from oxaloacetate: step 1/2. The chain is Citrate synthase, glyoxysomal from Cucurbita maxima (Pumpkin).